Reading from the N-terminus, the 638-residue chain is Chaperone protein DnaK (638 aa).

A Phosphothreonine; by autocatalysis modification is found at T196. Residues 592 to 638 (ASNLYQQPGAEAGAAPQPETNGQQESKGGDGAVNAEYEVIDGDDDKK) are disordered. The segment covering 597-610 (QQPGAEAGAAPQPE) has biased composition (low complexity). Over residues 629 to 638 (EVIDGDDDKK) the composition is skewed to acidic residues.

It belongs to the heat shock protein 70 family.

Acts as a chaperone. The polypeptide is Chaperone protein DnaK (Chlorobaculum parvum (strain DSM 263 / NCIMB 8327) (Chlorobium vibrioforme subsp. thiosulfatophilum)).